Reading from the N-terminus, the 210-residue chain is Vacuolar protein sorting-associated protein 28 homolog (210 aa).

The VPS28 N-terminal domain occupies Met1 to Asp106. The 97-residue stretch at Asn110–Asn206 folds into the VPS28 C-terminal domain.

Belongs to the VPS28 family. Component of the ESCRT-I complex (endosomal sorting complex required for transport I). In terms of tissue distribution, expressed in embryos.

Its subcellular location is the endosome. Component of the ESCRT-I complex, a regulator of vesicular trafficking process. In Caenorhabditis elegans, this protein is Vacuolar protein sorting-associated protein 28 homolog (vps-28).